The following is a 262-amino-acid chain: F-actin-capping protein subunit alpha (262 aa).

This sequence belongs to the F-actin-capping protein alpha subunit family. As to quaternary structure, heterodimer of an alpha and a beta subunit.

Its function is as follows. F-actin-capping proteins bind in a Ca(2+)-independent manner to the fast growing ends of actin filaments (barbed end) thereby blocking the exchange of subunits at these ends. Unlike other capping proteins (such as gelsolin and severin), these proteins do not sever actin filaments. In Candida glabrata (strain ATCC 2001 / BCRC 20586 / JCM 3761 / NBRC 0622 / NRRL Y-65 / CBS 138) (Yeast), this protein is F-actin-capping protein subunit alpha (CAP1).